Consider the following 175-residue polypeptide: 19.0 kDa class II heat shock protein (175 aa).

One can recognise a sHSP domain in the interval 42–165 (DRRAMANTPM…KPRVVEVKVA (124 aa)). The segment at 145–175 (TVDKKPPPEPKKPRVVEVKVAGAGEPKGKGK) is disordered. Positions 146–161 (VDKKPPPEPKKPRVVE) are enriched in basic and acidic residues.

This sequence belongs to the small heat shock protein (HSP20) family. As to quaternary structure, may form oligomeric structures.

The protein resides in the cytoplasm. In Oryza sativa subsp. japonica (Rice), this protein is 19.0 kDa class II heat shock protein (HSP19.0).